We begin with the raw amino-acid sequence, 254 residues long: Probable phosphomannomutase (254 aa).

Asp14 (nucleophile) is an active-site residue. Mg(2+)-binding residues include Asp14 and Asp16. The Proton donor/acceptor role is filled by Asp16. Alpha-D-mannose 1-phosphate is bound by residues Arg23, Arg129, Arg140, Arg147, Ser185, and Asp187. Residues Asp214, Phe226, Asp228, and Thr231 each coordinate Mg(2+).

The protein belongs to the eukaryotic PMM family. In terms of assembly, homodimer.

Its subcellular location is the cytoplasm. The enzyme catalyses alpha-D-mannose 1-phosphate = D-mannose 6-phosphate. Its pathway is nucleotide-sugar biosynthesis; GDP-alpha-D-mannose biosynthesis; alpha-D-mannose 1-phosphate from D-fructose 6-phosphate: step 2/2. Involved in the synthesis of the GDP-mannose and dolichol-phosphate-mannose required for a number of critical mannosyl transfer reactions. The chain is Probable phosphomannomutase from Caenorhabditis elegans.